Reading from the N-terminus, the 177-residue chain is MSRIGKKPVPLPKGVTASISGQTVEVKGPKGTRTFSATDDVTIALEEGTVKVTPRGTSKRARQQWGMVRSQVENLVTGVTAGFKKELEITGVGYRAQMAGNVLKLSLGYSHDVNFEVPAGVTVTTPKQTEITVEGIDQQLVGQVAANIREWRRPEPYKGKGIRYKDEFIFRKEGKKK.

It belongs to the universal ribosomal protein uL6 family. In terms of assembly, part of the 50S ribosomal subunit.

Functionally, this protein binds to the 23S rRNA, and is important in its secondary structure. It is located near the subunit interface in the base of the L7/L12 stalk, and near the tRNA binding site of the peptidyltransferase center. The protein is Large ribosomal subunit protein uL6 of Cereibacter sphaeroides (strain ATCC 17025 / ATH 2.4.3) (Rhodobacter sphaeroides).